The following is a 459-amino-acid chain: Trigger factor (459 aa).

The 80-residue stretch at 166 to 245 folds into the PPIase FKBP-type domain; it reads GDFANIDLTA…VNSVKAEELP (80 aa).

This sequence belongs to the FKBP-type PPIase family. Tig subfamily.

Its subcellular location is the cytoplasm. It carries out the reaction [protein]-peptidylproline (omega=180) = [protein]-peptidylproline (omega=0). Functionally, involved in protein export. Acts as a chaperone by maintaining the newly synthesized protein in an open conformation. Functions as a peptidyl-prolyl cis-trans isomerase. The polypeptide is Trigger factor (Bifidobacterium longum (strain NCC 2705)).